Reading from the N-terminus, the 242-residue chain is MPDYIRTSRAADSLRDIKITPHFLPHTDGSCLIECGNTKVICTASVDENAPPFLHGKNQGWVTAEYGMLPASTALRMRREASAGKQSGRTQEIQRLIGRSLRAVVDMEKLGERQILIDCDVIQADGGTRTASITGAFVALQIAVGKLVSDGILSENPILEAVAAVSAGVVNGVPLLDLDYPEDSGCDSDVNIVMTASGKIIEIQGTAEGAPFSLDELGKLVALAQKGIGELLRYQQNALSVA.

Residues Arg89 and 127–129 (GTR) each bind phosphate.

This sequence belongs to the RNase PH family. As to quaternary structure, homohexameric ring arranged as a trimer of dimers.

It catalyses the reaction tRNA(n+1) + phosphate = tRNA(n) + a ribonucleoside 5'-diphosphate. Its function is as follows. Phosphorolytic 3'-5' exoribonuclease that plays an important role in tRNA 3'-end maturation. Removes nucleotide residues following the 3'-CCA terminus of tRNAs; can also add nucleotides to the ends of RNA molecules by using nucleoside diphosphates as substrates, but this may not be physiologically important. Probably plays a role in initiation of 16S rRNA degradation (leading to ribosome degradation) during starvation. The sequence is that of Ribonuclease PH from Neisseria gonorrhoeae (strain ATCC 700825 / FA 1090).